The chain runs to 217 residues: Octanoyltransferase (217 aa).

Residues 32-207 enclose the BPL/LPL catalytic domain; that stretch reads SESHDELWIV…TFSQLLGYQH (176 aa). Residues 71 to 78, 138 to 140, and 151 to 153 each bind substrate; these read RGGQVTYH, SLG, and GLA. C169 serves as the catalytic Acyl-thioester intermediate.

Belongs to the LipB family.

The protein localises to the cytoplasm. The catalysed reaction is octanoyl-[ACP] + L-lysyl-[protein] = N(6)-octanoyl-L-lysyl-[protein] + holo-[ACP] + H(+). It functions in the pathway protein modification; protein lipoylation via endogenous pathway; protein N(6)-(lipoyl)lysine from octanoyl-[acyl-carrier-protein]: step 1/2. Functionally, catalyzes the transfer of endogenously produced octanoic acid from octanoyl-acyl-carrier-protein onto the lipoyl domains of lipoate-dependent enzymes. Lipoyl-ACP can also act as a substrate although octanoyl-ACP is likely to be the physiological substrate. The protein is Octanoyltransferase of Shewanella baltica (strain OS223).